A 508-amino-acid chain; its full sequence is Probable monogalactosyldiacylglycerol synthase 3, chloroplastic (508 aa).

The N-terminal 60 residues, 1–60, are a transit peptide targeting the chloroplast; the sequence is MAASSSSSSSMASPRGRSIRETVLETVAAYHQQQRMRRKFRKSLSYAGELSSAGRARGEG. Positions 51–79 are disordered; sequence SSAGRARGEGGASSSASTTSLCGPDEDDE.

The protein belongs to the glycosyltransferase 28 family.

It localises to the plastid. The protein localises to the chloroplast membrane. It carries out the reaction a 1,2-diacyl-sn-glycerol + UDP-alpha-D-galactose = a 1,2-diacyl-3-O-(beta-D-galactosyl)-sn-glycerol + UDP + H(+). In terms of biological role, involved in the synthesis of the major structural component of photosynthetic membranes. The sequence is that of Probable monogalactosyldiacylglycerol synthase 3, chloroplastic (MGD3) from Oryza sativa subsp. japonica (Rice).